Here is a 109-residue protein sequence, read N- to C-terminus: U26-theraphotoxin-Cg1a (109 aa).

The signal sequence occupies residues Met-1–Ala-18. Positions Tyr-19–Arg-67 are excised as a propeptide. Cystine bridges form between Cys-68/Cys-83, Cys-75/Cys-88, and Cys-82/Cys-103.

This sequence belongs to the neurotoxin 14 (magi-1) family. 07 (Jztx-56) subfamily. In terms of tissue distribution, expressed by the venom gland.

Its subcellular location is the secreted. Its function is as follows. Probable ion channel inhibitor. In Chilobrachys guangxiensis (Chinese earth tiger tarantula), this protein is U26-theraphotoxin-Cg1a.